Reading from the N-terminus, the 474-residue chain is PRAME family member 17 (474 aa).

An LRR 1; degenerate repeat occupies 97 to 124; sequence RWKLQVLDLRDVDGNFWTIWSGARALSC. The LRR 2; degenerate repeat unit spans residues 179-203; sequence HLCCNKVQNYSMPTSSFRNLLKRVY. The stretch at 204 to 230 is one LRR 3; degenerate repeat; it reads PDSIQELEIKRKCSLNKTGKFAPYLSQ. The LRR 4; degenerate repeat unit spans residues 231–265; the sequence is MSNLRKLFLAFGYDDELYVSGQQQFVPDLDCPFLC. 5 LRR repeats span residues 266–291, 292–323, 324–342, 348–375, and 376–400; these read LYYPQMLYIRKISNIKEHLEHLLRCL, KNPLGTFIFCHAYLADQDMECLSQYPSLSQLK, ELHLIHILMWTTNLEPLGA, AATLEILTLKDCQIQDSQLRVLLPALSR, and CSQLTTFYFRGNETSTNALKDLLCH.

This sequence belongs to the PRAME family.

This chain is PRAME family member 17, found in Homo sapiens (Human).